We begin with the raw amino-acid sequence, 192 residues long: Fe/S biogenesis protein NfuA (192 aa).

[4Fe-4S] cluster is bound by residues C149 and C152.

This sequence belongs to the NfuA family. Homodimer. It depends on [4Fe-4S] cluster as a cofactor.

Functionally, involved in iron-sulfur cluster biogenesis. Binds a 4Fe-4S cluster, can transfer this cluster to apoproteins, and thereby intervenes in the maturation of Fe/S proteins. Could also act as a scaffold/chaperone for damaged Fe/S proteins. The chain is Fe/S biogenesis protein NfuA from Shewanella sp. (strain ANA-3).